Here is a 344-residue protein sequence, read N- to C-terminus: DNA-directed RNA polymerase subunit alpha (344 aa).

The tract at residues 1 to 238 (MKVIKTAPLI…KQLGVFGEKP (238 aa)) is alpha N-terminal domain (alpha-NTD). The interval 253 to 344 (DAKDLSAKIE…EKLEDKGGND (92 aa)) is alpha C-terminal domain (alpha-CTD).

The protein belongs to the RNA polymerase alpha chain family. In terms of assembly, homodimer. The RNAP catalytic core consists of 2 alpha, 1 beta, 1 beta' and 1 omega subunit. When a sigma factor is associated with the core the holoenzyme is formed, which can initiate transcription.

The catalysed reaction is RNA(n) + a ribonucleoside 5'-triphosphate = RNA(n+1) + diphosphate. In terms of biological role, DNA-dependent RNA polymerase catalyzes the transcription of DNA into RNA using the four ribonucleoside triphosphates as substrates. The polypeptide is DNA-directed RNA polymerase subunit alpha (Helicobacter acinonychis (strain Sheeba)).